Consider the following 335-residue polypeptide: Lipase chaperone (335 aa).

Residues 1-21 (MSGSILLLPLAIALGLGFFIA) form a helical membrane-spanning segment.

The protein belongs to the lipase chaperone family.

Its subcellular location is the cell inner membrane. May be involved in the folding of the extracellular lipase during its passage through the periplasm. In Stutzerimonas stutzeri (strain A1501) (Pseudomonas stutzeri), this protein is Lipase chaperone.